The chain runs to 119 residues: Large ribosomal subunit protein bL19 (119 aa).

It belongs to the bacterial ribosomal protein bL19 family.

Functionally, this protein is located at the 30S-50S ribosomal subunit interface and may play a role in the structure and function of the aminoacyl-tRNA binding site. The polypeptide is Large ribosomal subunit protein bL19 (Pseudoalteromonas translucida (strain TAC 125)).